An 88-amino-acid chain; its full sequence is Small ribosomal subunit protein bS20 (88 aa).

Residues 1-27 are disordered; that stretch reads MANSKSAKKRALQSEKRRQHNASRRSM.

The protein belongs to the bacterial ribosomal protein bS20 family.

Functionally, binds directly to 16S ribosomal RNA. The chain is Small ribosomal subunit protein bS20 from Shewanella putrefaciens (strain CN-32 / ATCC BAA-453).